Reading from the N-terminus, the 540-residue chain is Dynein axonemal assembly factor 3 homolog (540 aa).

A disordered region spans residues 480–499 (AVTEAMPESTFKYDTDTDYG).

The protein belongs to the DNAAF3 family. Expressed in mechanosensory chordotonal (Ch) neurons, spermatocytes and spermatids (at protein level).

It localises to the cytoplasm. The protein localises to the dynein axonemal particle. In terms of biological role, required for the assembly of axonemal inner and outer dynein arms. Involved in the cytoplasmic preassembly of dyneins into complexes before their transport into cilia. Essential for the development of axonemal dynein motors in the sensory cilium of mechanosensory chordotonal (Ch) neurons and sperm flagellum, and consequently, is required for the mechanotransduction process of hearing and sperm mobility. The sequence is that of Dynein axonemal assembly factor 3 homolog from Drosophila melanogaster (Fruit fly).